The sequence spans 909 residues: Protein translocase subunit SecA (909 aa).

ATP contacts are provided by residues Gln87 and 105 to 109 (GEGKT). Residues 246 to 265 (LEQQEKEDEEGKNGDGDYTI) form a disordered region. Over residues 254 to 265 (EEGKNGDGDYTI) the composition is skewed to basic and acidic residues. Asp512 is a binding site for ATP. Over residues 834–858 (ESDVEAVEEQRRQADEQPKQYEHET) the composition is skewed to basic and acidic residues. The tract at residues 834 to 899 (ESDVEAVEEQ…NDPCPCGSGL (66 aa)) is disordered. The span at 859 to 875 (ASATQAPEQAPEAAPAA) shows a compositional bias: low complexity. 4 residues coordinate Zn(2+): Cys893, Cys895, Cys904, and His905.

It belongs to the SecA family. As to quaternary structure, monomer and homodimer. Part of the essential Sec protein translocation apparatus which comprises SecA, SecYEG and auxiliary proteins SecDF-YajC and YidC. Zn(2+) is required as a cofactor.

The protein localises to the cell inner membrane. Its subcellular location is the cytoplasm. It carries out the reaction ATP + H2O + cellular proteinSide 1 = ADP + phosphate + cellular proteinSide 2.. Functionally, part of the Sec protein translocase complex. Interacts with the SecYEG preprotein conducting channel. Has a central role in coupling the hydrolysis of ATP to the transfer of proteins into and across the cell membrane, serving both as a receptor for the preprotein-SecB complex and as an ATP-driven molecular motor driving the stepwise translocation of polypeptide chains across the membrane. This is Protein translocase subunit SecA from Pseudoalteromonas atlantica (strain T6c / ATCC BAA-1087).